A 117-amino-acid chain; its full sequence is Calcitonin receptor-stimulating peptide 2 (117 aa).

Residues 1–25 (MGFWKFPPFLVLSILVLYQAGMFHT) form the signal peptide. The propeptide occupies 26 to 79 (APVRLPLESSFDSATLTEEEVSLLLVAMVKDYVQMKATVLEQESEDFSITAQEK). Residues Cys-81 and Cys-86 are joined by a disulfide bond.

This sequence belongs to the calcitonin family. In terms of tissue distribution, mainly expressed in the thyroid gland and CNS. Found in the nerve cells of the cerebrum, hippocampus, hypothalamus, pons/midbrain and thalamus. Also detected in the glia-like cells of pons/midbrain and in meninx of tactus opticus.

It is found in the secreted. The protein is Calcitonin receptor-stimulating peptide 2 (CRSP2) of Sus scrofa (Pig).